We begin with the raw amino-acid sequence, 121 residues long: Ribosome-binding factor A (121 aa).

Belongs to the RbfA family. In terms of assembly, monomer. Binds 30S ribosomal subunits, but not 50S ribosomal subunits or 70S ribosomes.

It is found in the cytoplasm. In terms of biological role, one of several proteins that assist in the late maturation steps of the functional core of the 30S ribosomal subunit. Associates with free 30S ribosomal subunits (but not with 30S subunits that are part of 70S ribosomes or polysomes). Required for efficient processing of 16S rRNA. May interact with the 5'-terminal helix region of 16S rRNA. The protein is Ribosome-binding factor A of Hydrogenovibrio crunogenus (strain DSM 25203 / XCL-2) (Thiomicrospira crunogena).